Consider the following 540-residue polypeptide: MLRNLLLLLLPLLIEAKLPPFFLGRLNGKTLLNHHLDRLTASDGASIQETYPNLQVHNFTQKLDHFDPYNTKTWNQKYFYNPVFSRNNSIIFLMIGGEGPENGKWAANPNVQYLQWAKEFGADVFDLEHRFFGDSWPIPDMQTSSLRYLTTQQALADLAFFIEFMNQQYGFKNPRWVTFGGSYPGSLAAWFRQKYPQLTVGSVASSAPVNLKLDFYEYAMVVEDDLRITDPKCAQATKDAFVQMQKLALTAEGRNSLNNHFNLQPPFDANTTKLDINNFFGNIFNTYQGMTQYTYDGQSNSTHSDKTVRKMCDIMTNATETDVVMRVENLFLWFNQMEPASANLTVMPNSYWDVISQVGSGDLNVLGPDGAAARGWMWLCCNEIGFLQTTNQGNNVFGTGVPLNLFIDMCTDMFGDSMKMSQIMGGNKKSQNYYGGADFYNATNVVLPNGSLDPWHALGTYGTIKSQSLLPYLINGTAHCGDMYPSYDGEPGSLLAARAFVKENVRQFIRYDPNVDGPGGSSSSASLFVVAYIVCGFLFV.

An N-terminal signal peptide occupies residues 1–16; that stretch reads MLRNLLLLLLPLLIEA. N-linked (GlcNAc...) asparagine glycosylation is found at asparagine 58 and asparagine 87. Serine 182 (charge relay system) is an active-site residue. N-linked (GlcNAc...) asparagine glycans are attached at residues asparagine 270, asparagine 300, asparagine 317, asparagine 343, asparagine 441, and asparagine 449. The active-site Charge relay system is aspartate 453. Asparagine 475 carries N-linked (GlcNAc...) asparagine glycosylation. Histidine 479 serves as the catalytic Charge relay system.

Belongs to the peptidase S28 family.

The protein is Putative serine protease F56F10.1 of Caenorhabditis elegans.